A 110-amino-acid chain; its full sequence is Large ribosomal subunit protein uL22 (110 aa).

This sequence belongs to the universal ribosomal protein uL22 family. Part of the 50S ribosomal subunit.

In terms of biological role, this protein binds specifically to 23S rRNA; its binding is stimulated by other ribosomal proteins, e.g. L4, L17, and L20. It is important during the early stages of 50S assembly. It makes multiple contacts with different domains of the 23S rRNA in the assembled 50S subunit and ribosome. Its function is as follows. The globular domain of the protein is located near the polypeptide exit tunnel on the outside of the subunit, while an extended beta-hairpin is found that lines the wall of the exit tunnel in the center of the 70S ribosome. This is Large ribosomal subunit protein uL22 from Maridesulfovibrio salexigens (strain ATCC 14822 / DSM 2638 / NCIMB 8403 / VKM B-1763) (Desulfovibrio salexigens).